The sequence spans 374 residues: Flagellar P-ring protein (374 aa).

The first 29 residues, 1–29, serve as a signal peptide directing secretion; sequence MRRVRTTRLFQVACAAIVALASSAMSAHA.

It belongs to the FlgI family. As to quaternary structure, the basal body constitutes a major portion of the flagellar organelle and consists of four rings (L,P,S, and M) mounted on a central rod.

It localises to the periplasm. It is found in the bacterial flagellum basal body. In terms of biological role, assembles around the rod to form the L-ring and probably protects the motor/basal body from shearing forces during rotation. This is Flagellar P-ring protein from Bradyrhizobium sp. (strain BTAi1 / ATCC BAA-1182).